The primary structure comprises 720 residues: Mitogen-activated protein kinase 6 (720 aa).

Met1 participates in a covalent cross-link: Peptide (Met-Gly) (interchain with G-Cter in ubiquitin). The region spanning Tyr20–Met316 is the Protein kinase domain. ATP contacts are provided by residues Leu26–Val34 and Lys49. Asp152 serves as the catalytic Proton acceptor. The residue at position 189 (Ser189) is a Phosphoserine; by PAK1, PAK2 and PAK3. Residues Ser189–Gly191 carry the SEG motif motif. Residues Phe332–Glu337 carry the FRIEDE motif motif. 4 positions are modified to phosphoserine: Ser386, Ser452, Ser554, and Ser556. Residues Ser638–Glu657 are disordered. Over residues Glu647 to Glu657 the composition is skewed to basic and acidic residues. Ser683 carries the post-translational modification Phosphoserine. A compositionally biased stretch (polar residues) spans Pro698–Asn714. Residues Pro698–Asn720 are disordered.

This sequence belongs to the protein kinase superfamily. CMGC Ser/Thr protein kinase family. MAP kinase subfamily. As to quaternary structure, heterodimer with ERK4/MAPK4. Interacts with (via FRIEDE motif) MAPKAPK5. Interacts with UBE3A; this interaction may be indirect and mediated by HERC2, possibly via HERC2 interaction with NEURL4. Mg(2+) serves as cofactor. Phosphorylated at Ser-189 by PAK1, PAK2 and PAK3 resulting in catalytic activation. Phosphorylated by MAPKAPK5 at other sites. In terms of processing, ubiquitination at Met-1 leads to degradation by the proteasome pathway. Highest levels within the nervous system, expressed in different tissues, mostly in skeletal muscle.

The protein resides in the cytoplasm. It localises to the nucleus. It carries out the reaction L-seryl-[protein] + ATP = O-phospho-L-seryl-[protein] + ADP + H(+). It catalyses the reaction L-threonyl-[protein] + ATP = O-phospho-L-threonyl-[protein] + ADP + H(+). With respect to regulation, activated by phosphorylation at Ser-189. Atypical MAPK protein. Phosphorylates microtubule-associated protein 2 (MAP2) and MAPKAPK5. The precise role of the complex formed with MAPKAPK5 is still unclear, but the complex follows a complex set of phosphorylation events: upon interaction with atypical MAPKAPK5, ERK3/MAPK6 is phosphorylated at Ser-189 and then mediates phosphorylation and activation of MAPKAPK5, which in turn phosphorylates ERK3/MAPK6. May promote entry in the cell cycle. This is Mitogen-activated protein kinase 6 (Mapk6) from Rattus norvegicus (Rat).